The sequence spans 431 residues: Glucose-1-phosphate adenylyltransferase (431 aa).

Lys39 lines the beta-D-fructose 1,6-bisphosphate pocket. Residues Arg40, His46, and Arg52 each coordinate AMP. Tyr114 lines the alpha-D-glucose 1-phosphate pocket. Arg130 is an AMP binding site. Alpha-D-glucose 1-phosphate-binding positions include Gly179, 194-195, and Ser212; that span reads EK. Arg386 is an AMP binding site. Beta-D-fructose 1,6-bisphosphate is bound by residues 419-423 and 429-431; these read REMLR and QER.

The protein belongs to the bacterial/plant glucose-1-phosphate adenylyltransferase family. In terms of assembly, homotetramer.

It catalyses the reaction alpha-D-glucose 1-phosphate + ATP + H(+) = ADP-alpha-D-glucose + diphosphate. The protein operates within glycan biosynthesis; glycogen biosynthesis. Allosterically activated by fructose-1,6-bisphosphate (F16BP) and inhibited by AMP. Functionally, involved in the biosynthesis of ADP-glucose, a building block required for the elongation reactions to produce glycogen. Catalyzes the reaction between ATP and alpha-D-glucose 1-phosphate (G1P) to produce pyrophosphate and ADP-Glc. The polypeptide is Glucose-1-phosphate adenylyltransferase (Enterobacter sp. (strain 638)).